A 358-amino-acid chain; its full sequence is Trace amine-associated receptor 7b (358 aa).

Topologically, residues 1–47 (MATDNDSFPWDQDSILSSDMFSATSTELCYENLNRSCVRSPYSPGPR) are extracellular. Residues Asn-5 and Asn-34 are each glycosylated (N-linked (GlcNAc...) asparagine). Disulfide bonds link Cys-37–Cys-201 and Cys-120–Cys-205. The helical transmembrane segment at 48–68 (LILYAVFGFGAALAVCGNLLV) threads the bilayer. The Cytoplasmic segment spans residues 69–83 (MTSILHFRQLHSPAN). The helical transmembrane segment at 84-104 (FLVVSLACADFLVGLTVMPFS) threads the bilayer. Residues 105 to 121 (TVRSVEGCWYFGESYCK) are Extracellular-facing. The chain crosses the membrane as a helical span at residues 122-143 (LHTCFDVSFCYCSIFHLCFISV). Over 144-166 (DRYIAVSDPLTYPTRFTAFVSGK) the chain is Cytoplasmic. Residues 167-187 (CITFSWLLSTIYGFSLLYTGA) form a helical membrane-spanning segment. Residues 188–212 (NEAGLEDLVSALTCVGGCQLAVNQS) lie on the Extracellular side of the membrane. Asn-210 carries N-linked (GlcNAc...) asparagine glycosylation. Residues 213 to 233 (WVFINFLLFLIPTLVMITVYS) form a helical membrane-spanning segment. Over 234–274 (KIFLIAKQQAQNIEKMSKQTARASDSYKDRVAKRERKAAKT) the chain is Cytoplasmic. The helical transmembrane segment at 275–295 (LGIAVAAFLLSWLPYFIDSII) threads the bilayer. The Extracellular segment spans residues 296-309 (DAFLGFITPTYVYE). Residues 310–333 (ILVWIAYYNSAMNPLIYAFFYPWF) traverse the membrane as a helical segment. Residues 334 to 358 (RKAIKLIVSGKVLRENSSTTNLFPE) are Cytoplasmic-facing.

The protein belongs to the G-protein coupled receptor 1 family. As to expression, specifically expressed in neurons of the olfactory epithelium.

The protein resides in the cell membrane. Olfactory receptor specific for N,N-dimethylalkylamines trace amines, such as N,N-dimethylcyclohexylamine. Trace amine compounds are enriched in animal body fluids and act on trace amine-associated receptors (TAARs) to elicit both intraspecific and interspecific innate behaviors. Ligand-binding causes a conformation change that triggers signaling via G(s)-class of G alpha proteins (GNAL or GNAS). In Mus musculus (Mouse), this protein is Trace amine-associated receptor 7b.